The sequence spans 544 residues: Chaperonin GroEL 2 (544 aa).

ATP contacts are provided by residues 29-32 (TLGP), 86-90 (DGTTT), glycine 413, 479-481 (NAA), and aspartate 495.

Belongs to the chaperonin (HSP60) family. Forms a cylinder of 14 subunits composed of two heptameric rings stacked back-to-back. Interacts with the co-chaperonin GroES.

It is found in the cytoplasm. It carries out the reaction ATP + H2O + a folded polypeptide = ADP + phosphate + an unfolded polypeptide.. In terms of biological role, together with its co-chaperonin GroES, plays an essential role in assisting protein folding. The GroEL-GroES system forms a nano-cage that allows encapsulation of the non-native substrate proteins and provides a physical environment optimized to promote and accelerate protein folding. The protein is Chaperonin GroEL 2 of Prochlorococcus marinus (strain MIT 9515).